Here is an 816-residue protein sequence, read N- to C-terminus: Sodium/hydrogen exchanger 1 (816 aa).

Topologically, residues 1–98 are extracellular; it reads MLLWSAVRGL…FPVLGIDYTH (98 aa). Residues 37–50 are compositionally biased toward polar residues; sequence LQLSPTDSTTPDSQ. The interval 37–79 is disordered; it reads LQLSPTDSTTPDSQPSRERSIGDVTTAPPEVTPESRPVNRSVT. An N-linked (GlcNAc...) asparagine glycan is attached at N75. A helical membrane pass occupies residues 99 to 121; that stretch reads VRTPFEISLWILLACLMKIGFHV. Residues 122 to 130 lie on the Cytoplasmic side of the membrane; the sequence is IPTISSIVP. The helical transmembrane segment at 131–148 threads the bilayer; sequence ESCLLIVVGLLVGGLIKG. At 149 to 158 the chain is on the extracellular side; that stretch reads VGEKPPFLQS. A helical transmembrane segment spans residues 159–176; sequence EVFFLFLLPPIILDAGYF. The Cytoplasmic portion of the chain corresponds to 177–186; that stretch reads LPLRQFTENL. A helical membrane pass occupies residues 187-215; the sequence is GTILIFAVVGTLWNAFFLGGLMYAVCLVG. At 216–222 the chain is on the extracellular side; the sequence is GEQINNI. The helical transmembrane segment at 223 to 249 threads the bilayer; that stretch reads GLLDNLLFGSIISAVDPVAVLAVFEEI. The Cytoplasmic portion of the chain corresponds to 250-252; sequence HIN. Residues 253 to 283 form a helical membrane-spanning segment; sequence ELLHILVFGESLLNDAVTVVLYHLFEEFANY. The Extracellular segment spans residues 284 to 287; that stretch reads DHVG. Residues 288-322 form a helical membrane-spanning segment; that stretch reads IVDIVLGFLSFFVVALGGVFVGVVYGVIAAFTSRF. The Cytoplasmic segment spans residues 323 to 328; sequence TAHIRV. The chain crosses the membrane as a helical span at residues 329–341; that stretch reads IEPLFVFLYSYMA. Residues 342 to 350 lie on the Extracellular side of the membrane; the sequence is YLSAELFHL. The chain crosses the membrane as a helical span at residues 351–371; it reads SGIMALIASGVVMRPYVEANI. The Cytoplasmic portion of the chain corresponds to 372 to 373; it reads SH. A helical transmembrane segment spans residues 374 to 404; that stretch reads KSHTTIKYFLKMWSSVSETLIFIFLGVSTVA. The Extracellular segment spans residues 405 to 410; the sequence is GSHHWN. The chain crosses the membrane as a helical span at residues 411-438; sequence WTFVISTLLFCLIARVLGVLGLTWFINK. Residues 439–444 are Cytoplasmic-facing; it reads FRIVKL. The chain crosses the membrane as a helical span at residues 445–469; it reads TPKDQFIIAYGGLRGAIAFSLGYLL. Topologically, residues 470–475 are extracellular; sequence DKKHFP. A helical membrane pass occupies residues 476–505; the sequence is MCDLFLTAIITVIFFTVFVQGMTIRPLVDL. The interval 503-545 is interaction with TESC; sequence VDLLAVKKKQETKRSINEEIHTQFLDHLLTGIEDICGHYGHHH. The Cytoplasmic portion of the chain corresponds to 506-816; that stretch reads LAVKKKQETK…EGEPFIPKGQ (311 aa). The tract at residues 509–516 is PI(4,5)P2-binding region; that stretch reads KKKQETKR. The interaction with CHP2 stretch occupies residues 515–545; it reads KRSINEEIHTQFLDHLLTGIEDICGHYGHHH. The confers pH-dependent PI(4,5)P2 binding stretch occupies residues 540-545; it reads HYGHHH. The segment at 552 to 560 is PI(4,5)P2-binding region; it reads RFNKKYVKK. A phosphoserine mark is found at S599 and S602. T603 carries the post-translational modification Phosphothreonine. 2 positions are modified to phosphoserine: S605 and S648. The segment at 633 to 816 is interaction with TESC; sequence KILRNNLQKT…EGEPFIPKGQ (184 aa). Positions 633-816 are interaction with CALM1; sequence KILRNNLQKT…EGEPFIPKGQ (184 aa). Positions 684–687 are interaction with PPP3CA; the sequence is LTVP. Residues S693, S697, and S703 each carry the phosphoserine modification. The segment at 715 to 720 is interaction with PPP3CA; that stretch reads PVITID. Phosphoserine occurs at positions 723, 726, 729, 786, 788, and 797. The segment at 748–816 is disordered; the sequence is PRVAEEAAEE…EGEPFIPKGQ (69 aa). Polar residues predominate over residues 783-792; sequence PSDSPSSQRM.

The protein belongs to the monovalent cation:proton antiporter 1 (CPA1) transporter (TC 2.A.36) family. As to quaternary structure, homodimer; dimerization is crucial for its function. Oligomer. Interacts with CALM in a calcium-dependent manner. Interacts with TESC. Interacts (via the juxtamembrane region of the cytoplasmic C-terminal domain) with CHP1; the interaction occurs at the plasma membrane in a calcium-dependent manner. Interacts with CHP2; the interaction occurs in a calcium-dependent manner. Interacts with EZR; regulates the cytoskeletal interactions of SLC9A1 and promotes stress fiber formation. Post-translationally, ubiquitinated, leading to its degradation by the proteasome. Ubiquitination is reduced by CHP1. O-glycosylated. In terms of processing, palmitoylated; may play a major role in SLC9A1 regulation. Post-translationally, phosphorylation at Ser-648 by AKT1 reduces SLC9A1 binding to CALM1. As to expression, kidney and intestine.

It localises to the cell membrane. The protein localises to the basolateral cell membrane. The catalysed reaction is Na(+)(in) + H(+)(out) = Na(+)(out) + H(+)(in). It catalyses the reaction Li(+)(out) + H(+)(in) = Li(+)(in) + H(+)(out). The enzyme catalyses Li(+)(in) + Na(+)(out) = Li(+)(out) + Na(+)(in). With respect to regulation, activated at acidic pHs. Inhibited by cariporide and eniporide. Phosphatidylinositol 4,5-bisphosphate (PI(4,5)P2) and phosphatidylinositol 3,4,5-trisphosphate (PI(3,4,5)P3) bind and differentially regulate SLC9A1 activity. Its function is as follows. Electroneutral Na(+) /H(+) antiporter that extrudes Na(+) in exchange for external protons driven by the inward sodium ion chemical gradient, protecting cells from acidification that occurs from metabolism. Exchanges intracellular H(+) ions for extracellular Na(+) in 1:1 stoichiometry. Plays a key role in maintening intracellular pH neutral and cell volume, and thus is important for cell growth, proliferation, migration and survival. In addition, can transport lithium Li(+) and functions also as a Na(+)/Li(+) antiporter. SLC9A1 also functions in membrane anchoring and organization of scaffolding complexes that coordinate signaling inputs. The sequence is that of Sodium/hydrogen exchanger 1 (SLC9A1) from Oryctolagus cuniculus (Rabbit).